Reading from the N-terminus, the 311-residue chain is Probable manganese-dependent inorganic pyrophosphatase (311 aa).

The Mn(2+) site is built by histidine 9, aspartate 13, aspartate 15, aspartate 75, histidine 97, and aspartate 149.

Belongs to the PPase class C family. Requires Mn(2+) as cofactor.

It localises to the cytoplasm. It carries out the reaction diphosphate + H2O = 2 phosphate + H(+). This Lactobacillus gasseri (strain ATCC 33323 / DSM 20243 / BCRC 14619 / CIP 102991 / JCM 1131 / KCTC 3163 / NCIMB 11718 / NCTC 13722 / AM63) protein is Probable manganese-dependent inorganic pyrophosphatase.